Here is a 355-residue protein sequence, read N- to C-terminus: Holliday junction branch migration complex subunit RuvB (355 aa).

The interval Thr-4–Tyr-190 is large ATPase domain (RuvB-L). ATP is bound by residues Leu-29, Arg-30, Gly-71, Lys-74, Thr-75, Thr-76, Glu-137–Tyr-139, Arg-180, Tyr-190, and Arg-227. Mg(2+) is bound at residue Thr-75. Residues Asp-191–Asp-261 are small ATPAse domain (RuvB-S). The segment at Pro-264–Ala-355 is head domain (RuvB-H). Residues Arg-300, Arg-319, and Arg-324 each contribute to the DNA site.

It belongs to the RuvB family. Homohexamer. Forms an RuvA(8)-RuvB(12)-Holliday junction (HJ) complex. HJ DNA is sandwiched between 2 RuvA tetramers; dsDNA enters through RuvA and exits via RuvB. An RuvB hexamer assembles on each DNA strand where it exits the tetramer. Each RuvB hexamer is contacted by two RuvA subunits (via domain III) on 2 adjacent RuvB subunits; this complex drives branch migration. In the full resolvosome a probable DNA-RuvA(4)-RuvB(12)-RuvC(2) complex forms which resolves the HJ.

The protein resides in the cytoplasm. It carries out the reaction ATP + H2O = ADP + phosphate + H(+). In terms of biological role, the RuvA-RuvB-RuvC complex processes Holliday junction (HJ) DNA during genetic recombination and DNA repair, while the RuvA-RuvB complex plays an important role in the rescue of blocked DNA replication forks via replication fork reversal (RFR). RuvA specifically binds to HJ cruciform DNA, conferring on it an open structure. The RuvB hexamer acts as an ATP-dependent pump, pulling dsDNA into and through the RuvAB complex. RuvB forms 2 homohexamers on either side of HJ DNA bound by 1 or 2 RuvA tetramers; 4 subunits per hexamer contact DNA at a time. Coordinated motions by a converter formed by DNA-disengaged RuvB subunits stimulates ATP hydrolysis and nucleotide exchange. Immobilization of the converter enables RuvB to convert the ATP-contained energy into a lever motion, pulling 2 nucleotides of DNA out of the RuvA tetramer per ATP hydrolyzed, thus driving DNA branch migration. The RuvB motors rotate together with the DNA substrate, which together with the progressing nucleotide cycle form the mechanistic basis for DNA recombination by continuous HJ branch migration. Branch migration allows RuvC to scan DNA until it finds its consensus sequence, where it cleaves and resolves cruciform DNA. The polypeptide is Holliday junction branch migration complex subunit RuvB (Burkholderia vietnamiensis (strain G4 / LMG 22486) (Burkholderia cepacia (strain R1808))).